Reading from the N-terminus, the 118-residue chain is Co-chaperonin GroES (118 aa).

Belongs to the GroES chaperonin family. In terms of assembly, heptamer of 7 subunits arranged in a ring. Interacts with the chaperonin GroEL.

It is found in the cytoplasm. Its function is as follows. Together with the chaperonin GroEL, plays an essential role in assisting protein folding. The GroEL-GroES system forms a nano-cage that allows encapsulation of the non-native substrate proteins and provides a physical environment optimized to promote and accelerate protein folding. GroES binds to the apical surface of the GroEL ring, thereby capping the opening of the GroEL channel. This is Co-chaperonin GroES from Helicobacter pylori (strain G27).